The chain runs to 491 residues: Katanin p60 ATPase-containing subunit A1 (491 aa).

Residues 1–29 are interaction with KATNB1; it reads MSLLMITENVKLAREYALLGNYDSAMVYY. The tract at residues 1 to 75 is interaction with dynein and NDEL1; it reads MSLLMITENV…VKEIMKTLES (75 aa). The segment at 1–185 is interaction with microtubules; sequence MSLLMITENV…EPEANKFDST (185 aa). The residue at position 42 (serine 42) is a Phosphoserine; by DYRK2. The tract at residues 87–183 is disordered; it reads QHELPSSEGE…VTEPEANKFD (97 aa). Residues 145–169 are compositionally biased toward basic and acidic residues; sequence HSDRGKAVRSREKKEQSKGREEKNK. Residue 249-256 participates in ATP binding; sequence GPPGTGKT.

Belongs to the AAA ATPase family. Katanin p60 subunit A1 subfamily. Can homooligomerize into hexameric rings, which may be promoted by interaction with microtubules. Interacts with KATNB1, which may serve as a targeting subunit. Interacts with ASPM; the katanin complex formation KATNA1:KATNB1 is required for the association of ASPM. Interacts with dynein and NDEL1. Associates with the E3 ligase complex containing DYRK2, EDD/UBR5, DDB1 and DCAF1 proteins (EDVP complex). Interacts with KLHL42 (via the kelch domains). Interacts with CUL3; the interaction is enhanced by KLHL42. Interacts with KATNB1 and KATNBL1. In terms of processing, phosphorylation by DYRK2 triggers ubiquitination and subsequent degradation. Post-translationally, ubiquitinated by the BCR(KLHL42) E3 ubiquitin ligase complex, leading to its proteasomal degradation. Ubiquitinated by the EDVP E3 ligase complex and subsequently targeted for proteasomal degradation.

Its subcellular location is the cytoplasm. The protein resides in the midbody. The protein localises to the cytoskeleton. It is found in the microtubule organizing center. It localises to the centrosome. Its subcellular location is the spindle pole. The protein resides in the spindle. The catalysed reaction is n ATP + n H2O + a microtubule = n ADP + n phosphate + (n+1) alpha/beta tubulin heterodimers.. Its activity is regulated as follows. ATPase activity is stimulated by microtubules, which promote homooligomerization. ATP-dependent microtubule severing is stimulated by interaction with KATNB1. Functionally, catalytic subunit of a complex which severs microtubules in an ATP-dependent manner. Microtubule severing may promote rapid reorganization of cellular microtubule arrays and the release of microtubules from the centrosome following nucleation. Microtubule release from the mitotic spindle poles may allow depolymerization of the microtubule end proximal to the spindle pole, leading to poleward microtubule flux and poleward motion of chromosome. Microtubule release within the cell body of neurons may be required for their transport into neuronal processes by microtubule-dependent motor proteins. This transport is required for axonal growth. This chain is Katanin p60 ATPase-containing subunit A1 (Katna1), found in Rattus norvegicus (Rat).